Reading from the N-terminus, the 280-residue chain is Putative pyruvate, phosphate dikinase regulatory protein (280 aa).

152–159 is an ADP binding site; sequence GISRTSKT.

This sequence belongs to the pyruvate, phosphate/water dikinase regulatory protein family. PDRP subfamily.

It catalyses the reaction N(tele)-phospho-L-histidyl/L-threonyl-[pyruvate, phosphate dikinase] + ADP = N(tele)-phospho-L-histidyl/O-phospho-L-threonyl-[pyruvate, phosphate dikinase] + AMP + H(+). The enzyme catalyses N(tele)-phospho-L-histidyl/O-phospho-L-threonyl-[pyruvate, phosphate dikinase] + phosphate + H(+) = N(tele)-phospho-L-histidyl/L-threonyl-[pyruvate, phosphate dikinase] + diphosphate. Functionally, bifunctional serine/threonine kinase and phosphorylase involved in the regulation of the pyruvate, phosphate dikinase (PPDK) by catalyzing its phosphorylation/dephosphorylation. In Clostridioides difficile (strain 630) (Peptoclostridium difficile), this protein is Putative pyruvate, phosphate dikinase regulatory protein.